The following is a 479-amino-acid chain: MSKILTTASGAPVADNQNSRSAGPRGPLLLDDFHLIEKLAHFNRENIPERRVHAKGSGAYGTFTVTRDITGYTSAKLFEQVGKQTETFLRFSTVGGERGSADTERDPRGFAVKFYTEEGNWDIVGNNTPVFFIRDPLKFPDFIHTQKRHPQSNLKNAQIFWDSWSHSPEALHQVTILFSDRGIPDGYRHMHGFGSHTYSLINAQGERTWVKWHFKTQQGIKNLAPADAARLAGTDPDYAQRDLFEAIERGDYPRWTVCIQVMSEAEAASRDENPFDVTKTWSQKDYPLIEVGVLELNRNPLNYFAEVEQAAFGPSNMVPGVGLSPDRMLQGRVFAYADAHRYRVGTNHQQLPVNAPRCPVNSYQRDGSMATGSYGSAPNYEPNSYAAAPKQSPRHAEPALALNGSADRYDHREDADYYSHAGALFRLMSDEQKALLISNIAGTMAGVSENVIQRQLQYFFKADPAYGEGIAKGLGINLA.

Over residues 1 to 21 (MSKILTTASGAPVADNQNSRS) the composition is skewed to polar residues. The segment at 1-25 (MSKILTTASGAPVADNQNSRSAGPR) is disordered. Active-site residues include H53 and N126. Residue Y336 participates in heme binding. The disordered stretch occupies residues 350-376 (QLPVNAPRCPVNSYQRDGSMATGSYGS). Positions 361–376 (NSYQRDGSMATGSYGS) are enriched in polar residues.

This sequence belongs to the catalase family. Heme is required as a cofactor.

It carries out the reaction 2 H2O2 = O2 + 2 H2O. Its activity is regulated as follows. Activated by peroxide. Its function is as follows. The major expressed catalase protein in strain Corvallis in stationary phase. Decomposes hydrogen peroxide into water and oxygen; serves to protect cells from the toxic effects of hydrogen peroxide. This is Catalase A (katA) from Pseudomonas putida (Arthrobacter siderocapsulatus).